We begin with the raw amino-acid sequence, 173 residues long: MSGEHLQVVHGDITRMEVDAIVNAANSGLLGGGGVDGAIHGAGGSAIKEACRAIRDTQGGCPTGEAVITTGGHLPAPYVIHAVGPVWQGGDQGEDELLANAYRNSIRLAAQHHLRRLAFPNISTGIYAFPRERAADIAIAAVREALAAAPEIEQVTFVCFDDENYRLYRERLS.

Positions 1–173 (MSGEHLQVVH…NYRLYRERLS (173 aa)) constitute a Macro domain.

This sequence belongs to the MacroD-type family.

The chain is Macro domain-containing protein in gbd 3'region from Cupriavidus necator (Alcaligenes eutrophus).